A 229-amino-acid polypeptide reads, in one-letter code: UPF0758 protein Fjoh_0413 (229 aa).

One can recognise an MPN domain in the interval 107–229 (KITSSKDAFT…YYSFVDEGIF (123 aa)). The Zn(2+) site is built by histidine 178, histidine 180, and aspartate 191. Residues 178 to 191 (HNHPSGELNPSQAD) carry the JAMM motif motif.

Belongs to the UPF0758 family.

The protein is UPF0758 protein Fjoh_0413 of Flavobacterium johnsoniae (strain ATCC 17061 / DSM 2064 / JCM 8514 / BCRC 14874 / CCUG 350202 / NBRC 14942 / NCIMB 11054 / UW101) (Cytophaga johnsonae).